The following is a 487-amino-acid chain: Glutamate--tRNA ligase 2 (487 aa).

The 'HIGH' region motif lies at 24-34 (PSPTGFLHIGG). A 'KMSKS' region motif is present at residues 258-262 (KLSKR). K261 lines the ATP pocket.

The protein belongs to the class-I aminoacyl-tRNA synthetase family. Glutamate--tRNA ligase type 1 subfamily. Monomer.

Its subcellular location is the cytoplasm. It catalyses the reaction tRNA(Glu) + L-glutamate + ATP = L-glutamyl-tRNA(Glu) + AMP + diphosphate. Functionally, catalyzes the attachment of glutamate to tRNA(Glu) in a two-step reaction: glutamate is first activated by ATP to form Glu-AMP and then transferred to the acceptor end of tRNA(Glu). This Novosphingobium aromaticivorans (strain ATCC 700278 / DSM 12444 / CCUG 56034 / CIP 105152 / NBRC 16084 / F199) protein is Glutamate--tRNA ligase 2.